A 286-amino-acid chain; its full sequence is MFNWIKTFMLMAAITALFIVIGGMIGGRSGMMLALLFALGMNFFSYWFSDKMVLRMYNAQEVNETSAPQFYRMVQELAGRAGLPMPRVYLIDEAQPNAFATGRNPEHAAVAATTGILNILSERELRGVMAHELAHVQHRDILISTISATMAGAISALANFAVFFGGRDSEGRPANPIAGIAVAILAPLAAAMIQMAISRAREFEADRGGATISGDPQALASALDKIHRYAAGIPFAAAEAHPATAQMMIMNPLHGGGLANLFSTHPATEERIARLMQMAQTGQYPA.

2 helical membrane-spanning segments follow: residues 7 to 27 (TFMLMAAITALFIVIGGMIGG) and 29 to 49 (SGMMLALLFALGMNFFSYWFS). His-131 is a binding site for Zn(2+). The active site involves Glu-132. His-135 is a binding site for Zn(2+). Transmembrane regions (helical) follow at residues 146–166 (ISATMAGAISALANFAVFFGG) and 177–197 (IAGIAVAILAPLAAAMIQMAI). Glu-202 contributes to the Zn(2+) binding site.

The protein belongs to the peptidase M48B family. Requires Zn(2+) as cofactor.

The protein localises to the cell inner membrane. The protein is Protease HtpX homolog of Ralstonia pickettii (strain 12J).